Consider the following 302-residue polypeptide: MISASLQQRKTRTRRSMLFVPGANAAMVSNSFIYPADALMFDLEDSVALREKDTARRMVYHALQHPLYRDIETIVRVNALDSEWGVNDLEAVVRGGADVVRLPKTDTAQDVLDIEKEILRIEKACGREPGSTGLLAAIESPLGITRAVEIAHASERLIGIALGAEDYVRNLRTERSPEGTELLFARCSILQAARSAGIQAFDTVYSDANNEAGFLQEAAHIKQLGFDGKSLINPRQIDLLHNLYAPTQKEVDHARRVVEAAEAAAREGLGVVSLNGKMVDGPVIDRARLVLSRAELSGIREE.

Residues Arg-76 and Glu-139 each contribute to the substrate site. Mg(2+) is bound by residues Glu-139 and Asp-166.

This sequence belongs to the HpcH/HpaI aldolase family. Citrate lyase beta subunit subfamily. In terms of assembly, oligomer with a subunit composition of (alpha,beta,gamma)6. The cofactor is Mg(2+).

It is found in the cytoplasm. The catalysed reaction is citrate = oxaloacetate + acetate. It carries out the reaction (3S)-citryl-CoA = oxaloacetate + acetyl-CoA. In terms of biological role, represents a citryl-ACP lyase. This chain is Citrate lyase subunit beta (citE), found in Escherichia coli O6:H1 (strain CFT073 / ATCC 700928 / UPEC).